We begin with the raw amino-acid sequence, 337 residues long: Glyceraldehyde-3-phosphate dehydrogenase 3 (337 aa).

Residues 12–13 (RM) and K80 contribute to the NAD(+) site. D-glyceraldehyde 3-phosphate is bound by residues 152–154 (SCT) and T183. C153 serves as the catalytic Nucleophile. N184 provides a ligand contact to NAD(+). D-glyceraldehyde 3-phosphate is bound by residues R198, 211–212 (TG), and R234. N317 provides a ligand contact to NAD(+).

This sequence belongs to the glyceraldehyde-3-phosphate dehydrogenase family. As to quaternary structure, homotetramer.

It is found in the cytoplasm. The enzyme catalyses D-glyceraldehyde 3-phosphate + phosphate + NAD(+) = (2R)-3-phospho-glyceroyl phosphate + NADH + H(+). Its pathway is carbohydrate degradation; glycolysis; pyruvate from D-glyceraldehyde 3-phosphate: step 1/5. The protein operates within carbohydrate biosynthesis; gluconeogenesis. Its function is as follows. Catalyzes the oxidative phosphorylation of glyceraldehyde 3-phosphate (G3P) to 1,3-bisphosphoglycerate (BPG) using the cofactor NAD. The first reaction step involves the formation of a hemiacetal intermediate between G3P and a cysteine residue, and this hemiacetal intermediate is then oxidized to a thioester, with concomitant reduction of NAD to NADH. The reduced NADH is then exchanged with the second NAD, and the thioester is attacked by a nucleophilic inorganic phosphate to produce BPG. The protein is Glyceraldehyde-3-phosphate dehydrogenase 3 (gap3) of Nostoc sp. (strain PCC 7120 / SAG 25.82 / UTEX 2576).